Here is a 367-residue protein sequence, read N- to C-terminus: NAD(P)H-quinone oxidoreductase subunit 1, chloroplastic (367 aa).

8 helical membrane-spanning segments follow: residues 29–49, 96–116, 128–148, 176–196, 204–224, 266–286, 304–324, and 347–367; these read WIPLPILLLIILAVVGVLVVV, VLLFTLGPAIVVIPIFLSYLI, INLGIFFWITVSSVAPLGLLM, LALCVLSICLLSDSLSTIDIV, ILGWNIWRQPIGFIAFIIAAL, LVSALFASVLYLGGWSLPIPI, VISAFLGIGMTLLKTYLFLFL, and FLLPISLGNLLLTASLKIALL.

It belongs to the complex I subunit 1 family. In terms of assembly, NDH is composed of at least 16 different subunits, 5 of which are encoded in the nucleus.

It is found in the plastid. The protein localises to the chloroplast thylakoid membrane. The enzyme catalyses a plastoquinone + NADH + (n+1) H(+)(in) = a plastoquinol + NAD(+) + n H(+)(out). It carries out the reaction a plastoquinone + NADPH + (n+1) H(+)(in) = a plastoquinol + NADP(+) + n H(+)(out). NDH shuttles electrons from NAD(P)H:plastoquinone, via FMN and iron-sulfur (Fe-S) centers, to quinones in the photosynthetic chain and possibly in a chloroplast respiratory chain. The immediate electron acceptor for the enzyme in this species is believed to be plastoquinone. Couples the redox reaction to proton translocation, and thus conserves the redox energy in a proton gradient. The protein is NAD(P)H-quinone oxidoreductase subunit 1, chloroplastic of Mesostigma viride (Green alga).